We begin with the raw amino-acid sequence, 236 residues long: Small ribosomal subunit protein uS2c (236 aa).

Belongs to the universal ribosomal protein uS2 family.

It localises to the plastid. The protein resides in the chloroplast. This Agrostis stolonifera (Creeping bentgrass) protein is Small ribosomal subunit protein uS2c (rps2).